The primary structure comprises 263 residues: MAVGKNKGLSKGGKKGVKKKIVDPFTRKDWYDVKAPSMFATRQIGKTLVNRTQGTKIASEGLKYRVFEVSLADLQNDNDAERSFRKFRLIAEDVQGRNVLTNFHGMDLTTDKLRSMVKKWQTLIEANVDVKTTDGYLLRVFCIGFTNKDQMSQRKTCYAQHTQVRAIRKKMVEIITRDVTSSDLKEVVNKLLPDSIAKDIEKACQGIYPLHDVYIRKVKVLKKPRFELSKLLELHGDGKGGSDEPGARVDRPEGYEPPVQETV.

The segment covering 236–254 (GDGKGGSDEPGARVDRPEG) has biased composition (basic and acidic residues). The disordered stretch occupies residues 236–263 (GDGKGGSDEPGARVDRPEGYEPPVQETV).

The protein belongs to the eukaryotic ribosomal protein eS1 family. In terms of assembly, component of the small ribosomal subunit. Mature ribosomes consist of a small (40S) and a large (60S) subunit. The 40S subunit contains about 33 different proteins and 1 molecule of RNA (18S). The 60S subunit contains about 49 different proteins and 3 molecules of RNA (28S, 5.8S and 5S).

Its subcellular location is the cytoplasm. In Periplaneta americana (American cockroach), this protein is Small ribosomal subunit protein eS1.